The following is a 518-amino-acid chain: UDP-N-acetylmuramate--L-alanine ligase (518 aa).

158–164 (GTHGKTT) lines the ATP pocket.

This sequence belongs to the MurCDEF family.

The protein resides in the cytoplasm. The catalysed reaction is UDP-N-acetyl-alpha-D-muramate + L-alanine + ATP = UDP-N-acetyl-alpha-D-muramoyl-L-alanine + ADP + phosphate + H(+). Its pathway is cell wall biogenesis; peptidoglycan biosynthesis. Its function is as follows. Cell wall formation. The protein is UDP-N-acetylmuramate--L-alanine ligase of Crocosphaera subtropica (strain ATCC 51142 / BH68) (Cyanothece sp. (strain ATCC 51142)).